The following is a 430-amino-acid chain: NADH-quinone oxidoreductase subunit D 1 (430 aa).

The segment at 1–36 (MSEAKGVGGIDPRATPGSAGAGERPPMGTVSRAGDG) is disordered.

The protein belongs to the complex I 49 kDa subunit family. As to quaternary structure, NDH-1 is composed of 14 different subunits. Subunits NuoB, C, D, E, F, and G constitute the peripheral sector of the complex.

The protein localises to the cell inner membrane. The enzyme catalyses a quinone + NADH + 5 H(+)(in) = a quinol + NAD(+) + 4 H(+)(out). Its function is as follows. NDH-1 shuttles electrons from NADH, via FMN and iron-sulfur (Fe-S) centers, to quinones in the respiratory chain. The immediate electron acceptor for the enzyme in this species is believed to be ubiquinone. Couples the redox reaction to proton translocation (for every two electrons transferred, four hydrogen ions are translocated across the cytoplasmic membrane), and thus conserves the redox energy in a proton gradient. The protein is NADH-quinone oxidoreductase subunit D 1 of Anaeromyxobacter dehalogenans (strain 2CP-C).